Here is a 221-residue protein sequence, read N- to C-terminus: Veficolin-1 (221 aa).

An N-terminal signal peptide occupies residues 1–25; that stretch reads MTAWLDFPLALSPLVVVSMKGGSFG. In terms of domain architecture, Collagen-like spans 50 to 104; it reads QGQAGIPGIPGVPGTNGLPGAKGDLGPQGPPGERGSTGIPGKAGPKGDKGDQGEA. The tract at residues 54 to 104 is disordered; sequence GIPGIPGVPGTNGLPGAKGDLGPQGPPGERGSTGIPGKAGPKGDKGDQGEA. Residues 111 to 221 form the Fibrinogen C-terminal domain; it reads QQQEAGAKDC…DFNNSKTFAK (111 aa). An intrachain disulfide couples cysteine 120 to cysteine 148.

The protein belongs to the ficolin lectin family. Veficolin subfamily. Expressed by the mandibular venom duct.

The protein resides in the secreted. Functionally, initiates complement activation and/or interferes in platelet aggregation and/or blood coagulation. The protein is Veficolin-1 of Varanus komodoensis (Komodo dragon).